We begin with the raw amino-acid sequence, 730 residues long: Translation factor GUF1 homolog, mitochondrial (730 aa).

The tr-type G domain occupies 106-289 (ELIRNFCIIA…AVVVSIPPPK (184 aa)). Residues 115–122 (AHVDHGKS), 182–186 (DTPGH), and 236–239 (NKID) contribute to the GTP site.

This sequence belongs to the TRAFAC class translation factor GTPase superfamily. Classic translation factor GTPase family. LepA subfamily.

It localises to the mitochondrion inner membrane. The catalysed reaction is GTP + H2O = GDP + phosphate + H(+). Promotes mitochondrial protein synthesis. May act as a fidelity factor of the translation reaction, by catalyzing a one-codon backward translocation of tRNAs on improperly translocated ribosomes. Binds to mitochondrial ribosomes in a GTP-dependent manner. This is Translation factor GUF1 homolog, mitochondrial from Theileria annulata.